A 650-amino-acid polypeptide reads, in one-letter code: Threonine--tRNA ligase (650 aa).

The region spanning 3–65 is the TGS domain; sequence DLVKVTLPDG…DRDARLEIVT (63 aa). The catalytic stretch occupies residues 248-548; that stretch reads DHRRLGPQLG…LTEHYAGAFP (301 aa). 3 residues coordinate Zn(2+): cysteine 349, histidine 400, and histidine 525.

Belongs to the class-II aminoacyl-tRNA synthetase family. Homodimer. It depends on Zn(2+) as a cofactor.

Its subcellular location is the cytoplasm. It carries out the reaction tRNA(Thr) + L-threonine + ATP = L-threonyl-tRNA(Thr) + AMP + diphosphate + H(+). Its function is as follows. Catalyzes the attachment of threonine to tRNA(Thr) in a two-step reaction: L-threonine is first activated by ATP to form Thr-AMP and then transferred to the acceptor end of tRNA(Thr). Also edits incorrectly charged L-seryl-tRNA(Thr). The sequence is that of Threonine--tRNA ligase from Anaeromyxobacter dehalogenans (strain 2CP-C).